We begin with the raw amino-acid sequence, 419 residues long: Synaptotagmin-1 (419 aa).

Over 1–58 the chain is Vesicular; sequence MVSESHHEALAAPPVTTVATVLPSNATEPASPGEGKEDAFSKLKEKFMNELHKIPLPP. A glycan (N-linked (GlcNAc...) asparagine) is linked at Asn-25. The chain crosses the membrane as a helical span at residues 59 to 80; the sequence is WALIAIAIVAVLLVLTCCFCIC. S-palmitoyl cysteine attachment occurs at residues Cys-75, Cys-76, Cys-78, Cys-80, and Cys-83. At 81–419 the chain is on the cytoplasmic side; sequence KKCLFKKKNK…EVDAMLAVKK (339 aa). Residues 108–139 form a disordered region; the sequence is KDLGKTMKDQDDDAETGLTDGEEKEEPKEEEK. Positions 117-131 are enriched in acidic residues; the sequence is QDDDAETGLTDGEEK. Thr-126 is modified (phosphothreonine). The interval 133–379 is phospholipid binding; the sequence is EPKEEEKLGK…AIGKVFVGYN (247 aa). Residues 139–258 form the C2 1 domain; the sequence is KLGKLQYSLD…DFGHVTEEWR (120 aa). 3 residues coordinate Ca(2+): Leu-169, Asp-170, and Asp-176. Phosphotyrosine is present on Tyr-227. Positions 228, 229, 230, 233, 234, and 236 each coordinate Ca(2+). Ser-262 bears the Phosphoserine mark. The C2 2 domain occupies 270–403; that stretch reads KLGDICFSLR…NPRRPIAQWH (134 aa). Residues Asp-301 and Asp-307 each coordinate Ca(2+). 2 positions are modified to phosphoserine: Ser-340 and Ser-342. Residues Asp-361, Asp-363, and Asp-369 each contribute to the Ca(2+) site.

The protein belongs to the synaptotagmin family. As to quaternary structure, homotetramer. Heterodimer; heterodimerizes with SYT2 in presence of calcium. Interacts with SCAMP5. Interacts with STON2. Forms a complex with SV2B, syntaxin 1 and SNAP25. Interacts with SV2A, SV2B and SV2C. Interacts with RIMS1. Interacts with PRRT2. Interacts with DNAJC5 in a phosphorylation-dependent manner. Interacts (via N-terminus) with RAB3A. Interacts with SYT12. Interacts with calmodulin. Interacts with DNM1 (via C-terminal proline-rich domain (PRD)); this interaction facilitates vesicle fission during clathrin-mediated endocytosis (CME). Ca(2+) is required as a cofactor. Post-translationally, glycosylated.

It is found in the cytoplasmic vesicle. It localises to the secretory vesicle membrane. Its subcellular location is the secretory vesicle. The protein localises to the synaptic vesicle membrane. The protein resides in the chromaffin granule membrane. It is found in the cytoplasm. Functionally, calcium sensor that participates in triggering neurotransmitter release at the synapse. May have a regulatory role in the membrane interactions during trafficking of synaptic vesicles at the active zone of the synapse. It binds acidic phospholipids with a specificity that requires the presence of both an acidic head group and a diacyl backbone. A Ca(2+)-dependent interaction between synaptotagmin and putative receptors for activated protein kinase C has also been reported. It can bind to at least three additional proteins in a Ca(2+)-independent manner; these are neurexins, syntaxin and AP2. Plays a role in dendrite formation by melanocytes. The chain is Synaptotagmin-1 from Pongo abelii (Sumatran orangutan).